The sequence spans 164 residues: Neurotrophin-3 (164 aa).

Residues 1 to 3 form the signal peptide; the sequence is IQS. Residues 4–120 constitute a propeptide that is removed on maturation; it reads TNMDQQGSLT…ALNRTSRRKR (117 aa). An N-linked (GlcNAc...) asparagine glycan is attached at Asn113.

Belongs to the NGF-beta family.

The protein localises to the secreted. Its function is as follows. Seems to promote the survival of visceral and proprioceptive sensory neurons. This Sanzinia madagascariensis (Madagascar tree boa) protein is Neurotrophin-3 (NTF3).